A 1080-amino-acid chain; its full sequence is Carbamoyl phosphate synthase large chain (1080 aa).

The interval 1-403 (MPKRTDLRTI…SLQKAVRGLE (403 aa)) is carboxyphosphate synthetic domain. Arg129, Arg169, Gly175, Gly176, Glu208, Val210, Glu215, Gly241, Val242, His243, Gln285, and Glu299 together coordinate ATP. The ATP-grasp 1 domain maps to 133–328 (RVAMQEIGLE…IAKIAAKLAV (196 aa)). Mg(2+)-binding residues include Gln285, Glu299, and Asn301. Residues Gln285, Glu299, and Asn301 each contribute to the Mn(2+) site. Positions 404–554 (TGKVGLEPTG…YSTYEEECEA (151 aa)) are oligomerization domain. The carbamoyl phosphate synthetic domain stretch occupies residues 555 to 942 (APSDRRKIMI…AFARAQEAGD (388 aa)). The ATP-grasp 2 domain maps to 679-876 (QKLVQQLGLR…LAKIAARCMT (198 aa)). ATP-binding residues include Arg715, Arg754, Leu756, Glu761, Gly787, Val788, His789, Ser790, Gln830, and Glu847. Positions 830, 847, and 849 each coordinate Mg(2+). The Mn(2+) site is built by Gln830, Glu847, and Asn849. One can recognise an MGS-like domain in the interval 943–1080 (IRAPQPGRAF…LQELHKELQV (138 aa)). An allosteric domain region spans residues 943–1080 (IRAPQPGRAF…LQELHKELQV (138 aa)).

It belongs to the CarB family. In terms of assembly, composed of two chains; the small (or glutamine) chain promotes the hydrolysis of glutamine to ammonia, which is used by the large (or ammonia) chain to synthesize carbamoyl phosphate. Tetramer of heterodimers (alpha,beta)4. Mg(2+) is required as a cofactor. Requires Mn(2+) as cofactor.

The catalysed reaction is hydrogencarbonate + L-glutamine + 2 ATP + H2O = carbamoyl phosphate + L-glutamate + 2 ADP + phosphate + 2 H(+). The enzyme catalyses hydrogencarbonate + NH4(+) + 2 ATP = carbamoyl phosphate + 2 ADP + phosphate + 2 H(+). The protein operates within amino-acid biosynthesis; L-arginine biosynthesis; carbamoyl phosphate from bicarbonate: step 1/1. It functions in the pathway pyrimidine metabolism; UMP biosynthesis via de novo pathway; (S)-dihydroorotate from bicarbonate: step 1/3. Its function is as follows. Large subunit of the glutamine-dependent carbamoyl phosphate synthetase (CPSase). CPSase catalyzes the formation of carbamoyl phosphate from the ammonia moiety of glutamine, carbonate, and phosphate donated by ATP, constituting the first step of 2 biosynthetic pathways, one leading to arginine and/or urea and the other to pyrimidine nucleotides. The large subunit (synthetase) binds the substrates ammonia (free or transferred from glutamine from the small subunit), hydrogencarbonate and ATP and carries out an ATP-coupled ligase reaction, activating hydrogencarbonate by forming carboxy phosphate which reacts with ammonia to form carbamoyl phosphate. This chain is Carbamoyl phosphate synthase large chain, found in Xylella fastidiosa (strain 9a5c).